Consider the following 179-residue polypeptide: Cytochrome b6-f complex iron-sulfur subunit (179 aa).

A helical transmembrane segment spans residues 21 to 43; the sequence is LLTFGTVTGVALGALYPVVNYFI. The 102-residue stretch at 61-162 folds into the Rieske domain; the sequence is GNDIIVSEFL…ANVSDDKLVF (102 aa). Residues C108, H110, C126, and H129 each coordinate [2Fe-2S] cluster. C113 and C128 are disulfide-bonded.

The protein belongs to the Rieske iron-sulfur protein family. As to quaternary structure, the 4 large subunits of the cytochrome b6-f complex are cytochrome b6, subunit IV (17 kDa polypeptide, PetD), cytochrome f and the Rieske protein, while the 4 small subunits are PetG, PetL, PetM and PetN. The complex functions as a dimer. Requires [2Fe-2S] cluster as cofactor.

It is found in the cellular thylakoid membrane. The enzyme catalyses 2 oxidized [plastocyanin] + a plastoquinol + 2 H(+)(in) = 2 reduced [plastocyanin] + a plastoquinone + 4 H(+)(out). In terms of biological role, component of the cytochrome b6-f complex, which mediates electron transfer between photosystem II (PSII) and photosystem I (PSI), cyclic electron flow around PSI, and state transitions. The sequence is that of Cytochrome b6-f complex iron-sulfur subunit from Trichodesmium erythraeum (strain IMS101).